Here is a 518-residue protein sequence, read N- to C-terminus: MDEYSSIYSQPKTPRLKQEGFPDSIGDQHEKALIDENGEEDKKMASTEGTTGDSRSTPLTVSIPTFENVQALPTPMTYTPLSPGNLSMSPIDQSSLNIPKRRSHARLLDDMLSVTQPNQRVVSELIAPANLSPQRVVSLPTVTEEALVNDSVDSDNYTKEPYFPESSSSTEKCDDDIFQGFLLDHWDRPLLWKKVRPIGSGNFSTVLLYELMDQSNPKLKQVAVKRLKYPEELSNVEQINTSLRYKETLSRLENSLTRELQVLKSLNHPCIVKLLGINNPIFVTSKKPLCDLIIKTPRALPPCDMIMSYCPAGDLLAAVMARNGRLEAWLIQRIFTEVVLAVKYLHENSIIHRDLKLENILLKYSFDDINSFRDSPIYCKQNFIELADFGLCKKIENNEMCTARCGSEDYVSPEILMGVPYDGHLSDTWALGVILYSLFEDRLPFDPPPNASARQRSRATSHRIARFDWRWYRLSDYKTNVGKQIVENTLTRKNQRWSINEIYESPFVKTIADTLSFS.

At Met1 the chain carries N-acetylmethionine. The segment covering 1 to 12 (MDEYSSIYSQPK) has biased composition (polar residues). Residues 1-59 (MDEYSSIYSQPKTPRLKQEGFPDSIGDQHEKALIDENGEEDKKMASTEGTTGDSRSTPL) are disordered. A compositionally biased stretch (basic and acidic residues) spans 16–45 (LKQEGFPDSIGDQHEKALIDENGEEDKKMA). Polar residues predominate over residues 47-59 (TEGTTGDSRSTPL). A Phosphoserine modification is found at Ser132. Positions 192–508 (WKKVRPIGSG…INEIYESPFV (317 aa)) constitute a Protein kinase domain. ATP-binding positions include 198 to 206 (IGSGNFSTV) and Lys225. Asp354 acts as the Proton acceptor in catalysis.

It belongs to the protein kinase superfamily. CAMK Ser/Thr protein kinase family. NIM1 subfamily.

Its subcellular location is the cytoplasm. The catalysed reaction is L-seryl-[protein] + ATP = O-phospho-L-seryl-[protein] + ADP + H(+). It carries out the reaction L-threonyl-[protein] + ATP = O-phospho-L-threonyl-[protein] + ADP + H(+). Its function is as follows. Protein kinase that functions as a regulator in the pheromone-induced mating pathway downstream of mitogen-activated protein kinase (MAPK) FUS3. Diminishes transcriptional induction of genes in response to pheromone signaling. This chain is Serine/threonine-protein kinase PRR1 (PRR1), found in Saccharomyces cerevisiae (strain ATCC 204508 / S288c) (Baker's yeast).